A 285-amino-acid chain; its full sequence is Polyamine aminopropyltransferase (285 aa).

One can recognise a PABS domain in the interval 5-241; it reads DSWFTEHFQA…GWWSVTLSSK (237 aa). Gln-35 lines the S-methyl-5'-thioadenosine pocket. Residues His-66 and Asp-90 each contribute to the spermidine site. Residues Asp-110 and 141–142 contribute to the S-methyl-5'-thioadenosine site; that span reads DG. Asp-160 acts as the Proton acceptor in catalysis. 160-163 provides a ligand contact to spermidine; that stretch reads DSTD. Pro-167 is an S-methyl-5'-thioadenosine binding site.

This sequence belongs to the spermidine/spermine synthase family. As to quaternary structure, homodimer or homotetramer.

It localises to the cytoplasm. It carries out the reaction S-adenosyl 3-(methylsulfanyl)propylamine + putrescine = S-methyl-5'-thioadenosine + spermidine + H(+). The protein operates within amine and polyamine biosynthesis; spermidine biosynthesis; spermidine from putrescine: step 1/1. Catalyzes the irreversible transfer of a propylamine group from the amino donor S-adenosylmethioninamine (decarboxy-AdoMet) to putrescine (1,4-diaminobutane) to yield spermidine. The polypeptide is Polyamine aminopropyltransferase (Xylella fastidiosa (strain 9a5c)).